The chain runs to 454 residues: Argininosuccinate synthase (454 aa).

Residues 17–25 (AFSGGLDTS) and Ala43 contribute to the ATP site. An L-citrulline-binding site is contributed by Tyr99. ATP-binding residues include Gly129 and Thr131. Thr131, Asn135, and Asp136 together coordinate L-aspartate. Asn135 provides a ligand contact to L-citrulline. Residue Asp136 coordinates ATP. Residues Arg139 and Ser192 each contribute to the L-citrulline site. An ATP-binding site is contributed by Asp194. The L-citrulline site is built by Thr201, Glu203, and Glu280.

The protein belongs to the argininosuccinate synthase family. Type 2 subfamily. As to quaternary structure, homotetramer.

The protein resides in the cytoplasm. The enzyme catalyses L-citrulline + L-aspartate + ATP = 2-(N(omega)-L-arginino)succinate + AMP + diphosphate + H(+). It functions in the pathway amino-acid biosynthesis; L-arginine biosynthesis; L-arginine from L-ornithine and carbamoyl phosphate: step 2/3. The polypeptide is Argininosuccinate synthase (Yersinia enterocolitica serotype O:8 / biotype 1B (strain NCTC 13174 / 8081)).